Reading from the N-terminus, the 714-residue chain is EtfAB:quinone oxidoreductase (714 aa).

Helical transmembrane passes span 25–45 (YEWL…FGFW), 87–107 (AGWM…AAGI), 125–145 (IGFS…VMVL), 164–184 (DGWI…IEGL), 207–227 (PFGW…MLMW), and 236–256 (MAIA…HIFA). 4Fe-4S ferredoxin-type domains are found at residues 293–324 (WKDL…LNPK) and 375–405 (YDVV…HIPK). The [4Fe-4S] cluster site is built by cysteine 302, cysteine 305, cysteine 308, cysteine 312, cysteine 386, cysteine 389, cysteine 392, and cysteine 396.

Might constitute a membrane-associated complex with EtfA (Swol_0697), EtfB (Swol_0696), and the butyryl-CoA dehydrogenase Swol_1933 and/or Swol_2052. [4Fe-4S] cluster serves as cofactor.

It localises to the cell membrane. Its pathway is lipid metabolism; butanoate metabolism. Oxidoreductase involved in syntrophic growth of S.wolfei with butyrate. Is presumed to link the electron flow from butyryl-CoA dehydrogenases to the membrane, in conjunction with the electron transfer flavoprotein EtfAB. May transfer electrons to the menaquinone pool of the membrane. The protein is EtfAB:quinone oxidoreductase of Syntrophomonas wolfei subsp. wolfei (strain DSM 2245B / Goettingen).